Consider the following 156-residue polypeptide: MKLLLIAVGQRLPAWADTAYEDYAKRFPPDLRLELKAVKTEARTTGKPVEALMAAEKTRIEAALPRGCRRVVLDEHGQRVTTAQLAERLAVWQRDGRDVALLVGGPDGLDQTLRDGADEKLRLSDLTLPHAFVRVMLAEALYRAWTLSIGHPYHRE.

Residues Leu-73, Gly-104, and 123 to 128 (LSDLTL) contribute to the S-adenosyl-L-methionine site.

Belongs to the RNA methyltransferase RlmH family. As to quaternary structure, homodimer.

Its subcellular location is the cytoplasm. It carries out the reaction pseudouridine(1915) in 23S rRNA + S-adenosyl-L-methionine = N(3)-methylpseudouridine(1915) in 23S rRNA + S-adenosyl-L-homocysteine + H(+). Functionally, specifically methylates the pseudouridine at position 1915 (m3Psi1915) in 23S rRNA. This Leptothrix cholodnii (strain ATCC 51168 / LMG 8142 / SP-6) (Leptothrix discophora (strain SP-6)) protein is Ribosomal RNA large subunit methyltransferase H.